The following is an 873-amino-acid chain: Alanine--tRNA ligase (873 aa).

Positions 557, 561, 659, and 663 each coordinate Zn(2+).

The protein belongs to the class-II aminoacyl-tRNA synthetase family. It depends on Zn(2+) as a cofactor.

It localises to the cytoplasm. The catalysed reaction is tRNA(Ala) + L-alanine + ATP = L-alanyl-tRNA(Ala) + AMP + diphosphate. Catalyzes the attachment of alanine to tRNA(Ala) in a two-step reaction: alanine is first activated by ATP to form Ala-AMP and then transferred to the acceptor end of tRNA(Ala). Also edits incorrectly charged Ser-tRNA(Ala) and Gly-tRNA(Ala) via its editing domain. This Nitrosococcus oceani (strain ATCC 19707 / BCRC 17464 / JCM 30415 / NCIMB 11848 / C-107) protein is Alanine--tRNA ligase.